A 221-amino-acid chain; its full sequence is Small ribosomal subunit protein uS5 (221 aa).

One can recognise an S5 DRBM domain in the interval L46 to I109.

It belongs to the universal ribosomal protein uS5 family. In terms of assembly, part of the 30S ribosomal subunit. Contacts protein S4.

In terms of biological role, with S4 and S12 plays an important role in translational accuracy. This Picrophilus torridus (strain ATCC 700027 / DSM 9790 / JCM 10055 / NBRC 100828 / KAW 2/3) protein is Small ribosomal subunit protein uS5.